The chain runs to 576 residues: Putative export ATP-binding/permease protein RF_0214 (576 aa).

Residues 20 to 303 (LIIVMISLLS…IFELLSEIHL (284 aa)) enclose the ABC transmembrane type-1 domain. Transmembrane regions (helical) follow at residues 21 to 41 (IIVMISLLSVSASLLLIGSVF), 61 to 81 (ILYICLLIIILSIASFFRSYF), 135 to 155 (FLSFFIRNSVMLIGGVTLMFF), 158 to 178 (FKLASIVIITIPILLIPLIKF), 242 to 262 (ALFFAISIAIIFLAITLVVWI), and 277 to 297 (IISFIYYAIIAGFSSGGIFEL). The region spanning 336–572 (IEFKNVDFTY…SEIYRNICRE (237 aa)) is the ABC transporter domain. 371–378 (GRSGGGKS) contacts ATP.

Belongs to the ABC transporter superfamily. Homodimer.

Its subcellular location is the cell inner membrane. Functionally, part of an ABC transporter complex. Transmembrane domains (TMD) form a pore in the inner membrane and the ATP-binding domain (NBD) is responsible for energy generation. This chain is Putative export ATP-binding/permease protein RF_0214, found in Rickettsia felis (strain ATCC VR-1525 / URRWXCal2) (Rickettsia azadi).